Here is an 822-residue protein sequence, read N- to C-terminus: Aminopeptidase O (822 aa).

Residue His480 participates in Zn(2+) binding. Residue Glu481 is the Proton acceptor of the active site. Zn(2+)-binding residues include His484 and Glu503. The short motif at 692 to 702 (RRPGKRQRRKR) is the Nucleolar localization signal element.

It belongs to the peptidase M1 family. Zn(2+) is required as a cofactor.

The protein resides in the nucleus. Its subcellular location is the nucleolus. In terms of biological role, aminopeptidase which catalyzes the hydrolysis of amino acid residues from the N-terminus of peptide or protein substrates. In Rattus norvegicus (Rat), this protein is Aminopeptidase O (Aopep).